The following is a 540-amino-acid chain: MSILALVEDRPTPKEVYNWRIYLLAAVASFTSCMIGYDSAFIGTTLALGSFREEFEFTTMEPAAVNRVSANIVSCYQAGAFFGAFFAYPIGHFWGRKWGLLSAAAIFTLGAGLMLGANGDRGLGLIYGGRVLAGIGVGAGSNITPIYISELAPPSIRGHLVGVYELGWQIGGLVGFWINYGVSETLAPSHKQWIIPFAVQLIPSGLLLIGAVFLRESPRWLFSSDRREEAIENLCWIRQLPADHIYMIEEIGAIDQALEEQRSTIGLGFWKPFKAAGTNKKVMYRLFLGSMLFFWQNGSGINAINYYSPTVFKSIGLRGTNTGMFSTGIFGVVKTVVTFIWLLYLIDRMGRRLLLLVGAAGASVCLWIVGAYIKIANPAKNGNGEMTGGGIAAMFFFYLYTVFYTPSWNGTPWVMNSEMFEPNMRSLAQACAAASNWLWNFLISRFTPQMFDKMGYGVWFFFASLMLCSIVIVFFLIPETKGIPLESMDALFETKPIWRAHGIVLAKLREDEEQFRQDIEESGYTKSGEQRLESVQPKEA.

The Cytoplasmic segment spans residues 1–22 (MSILALVEDRPTPKEVYNWRIY). Residues 23–43 (LLAAVASFTSCMIGYDSAFIG) form a helical membrane-spanning segment. The Extracellular portion of the chain corresponds to 44–74 (TTLALGSFREEFEFTTMEPAAVNRVSANIVS). The chain crosses the membrane as a helical span at residues 75-95 (CYQAGAFFGAFFAYPIGHFWG). Over 96–97 (RK) the chain is Cytoplasmic. Residues 98–118 (WGLLSAAAIFTLGAGLMLGAN) form a helical membrane-spanning segment. Residues 119–130 (GDRGLGLIYGGR) lie on the Extracellular side of the membrane. Residues 131–151 (VLAGIGVGAGSNITPIYISEL) traverse the membrane as a helical segment. Topologically, residues 152–157 (APPSIR) are cytoplasmic. Residues 158–178 (GHLVGVYELGWQIGGLVGFWI) form a helical membrane-spanning segment. At 179 to 193 (NYGVSETLAPSHKQW) the chain is on the extracellular side. A helical transmembrane segment spans residues 194–214 (IIPFAVQLIPSGLLLIGAVFL). Topologically, residues 215 to 285 (RESPRWLFSS…AGTNKKVMYR (71 aa)) are cytoplasmic. The chain crosses the membrane as a helical span at residues 286-306 (LFLGSMLFFWQNGSGINAINY). The Extracellular segment spans residues 307-325 (YSPTVFKSIGLRGTNTGMF). The helical transmembrane segment at 326 to 346 (STGIFGVVKTVVTFIWLLYLI) threads the bilayer. Topologically, residues 347–352 (DRMGRR) are cytoplasmic. Residues 353–373 (LLLLVGAAGASVCLWIVGAYI) traverse the membrane as a helical segment. Residues 374–387 (KIANPAKNGNGEMT) lie on the Extracellular side of the membrane. Residues 388–408 (GGGIAAMFFFYLYTVFYTPSW) form a helical membrane-spanning segment. The Cytoplasmic segment spans residues 409 to 456 (NGTPWVMNSEMFEPNMRSLAQACAAASNWLWNFLISRFTPQMFDKMGY). A helical transmembrane segment spans residues 457–477 (GVWFFFASLMLCSIVIVFFLI). Topologically, residues 478–540 (PETKGIPLES…RLESVQPKEA (63 aa)) are extracellular. Positions 519–540 (IEESGYTKSGEQRLESVQPKEA) are disordered. Over residues 528 to 540 (GEQRLESVQPKEA) the composition is skewed to basic and acidic residues.

The protein belongs to the major facilitator superfamily. Sugar transporter (TC 2.A.1.1) family. In terms of assembly, interacts with creB. Post-translationally, ubiquitinated. Deubiquitinated by creB, probably to control its activity or amount.

Its subcellular location is the cell membrane. In terms of biological role, integral membrane transporter that imports quinic acid to be catabolized as a carbon source. The chain is Probable quinate permease (qutD) from Aspergillus clavatus (strain ATCC 1007 / CBS 513.65 / DSM 816 / NCTC 3887 / NRRL 1 / QM 1276 / 107).